Consider the following 706-residue polypeptide: Polycomb protein SCMH1 (706 aa).

MBT repeat units follow at residues 28–126 and 134–235; these read FTWD…LQPP and SSWP…LQPP. Disordered stretches follow at residues 233 to 350 and 576 to 595; these read QPPG…TVPS and GSDR…RDPS. 2 stretches are compositionally biased toward basic residues: residues 272 to 283 and 304 to 319; these read RGRKPGKKRGRT and FPKK…RKPR. Residues 329-340 are compositionally biased toward low complexity; it reads PTTSTPEPDTST. Basic and acidic residues predominate over residues 576 to 591; it reads GSDRHLESRDPPRLSG. The 66-residue stretch at 597–662 folds into the SAM domain; the sequence is WTVEDVMQFV…SFHIDRLKQV (66 aa).

The protein belongs to the SCM family. In terms of assembly, associates with a PRC1-like complex. Interacts with the SAM domain of PHC1 via its SAM domain in vitro. In terms of tissue distribution, most abundant in testis. Moderate levels detected in heart, brain, lung, liver, skeletal muscle and kidney and lower levels in spleen.

The protein resides in the nucleus. Functionally, associates with Polycomb group (PcG) multiprotein complexes; the complex class is required to maintain the transcriptionally repressive state of some genes. This Mus musculus (Mouse) protein is Polycomb protein SCMH1.